The following is an 84-amino-acid chain: Small ribosomal subunit protein eS27z (84 aa).

Residues Cys-39–Cys-61 form a C4-type zinc finger.

Belongs to the eukaryotic ribosomal protein eS27 family. In terms of assembly, (Microbial infection) May interact with Tomato yellow leaf curl virus (TYLCV) and papaya leaf curl China virus (PaLcuCNV) C2 proteins. This interaction prevents activation of Jasmonate signaling, thereby facilitating viral uptake by insects vectors. Zn(2+) is required as a cofactor.

The protein is Small ribosomal subunit protein eS27z (RPS27A) of Arabidopsis thaliana (Mouse-ear cress).